We begin with the raw amino-acid sequence, 297 residues long: Formylmethanofuran--tetrahydromethanopterin formyltransferase (297 aa).

It belongs to the FTR family. Homotetramer.

The protein localises to the cytoplasm. It catalyses the reaction N-formylmethanofuran + 5,6,7,8-tetrahydromethanopterin + H(+) = N(5)-formyl-5,6,7,8-tetrahydromethanopterin + methanofuran. The protein operates within one-carbon metabolism; methanogenesis from CO(2); 5,10-methenyl-5,6,7,8-tetrahydromethanopterin from CO(2): step 2/3. Functionally, catalyzes the reversible transfer of a formyl group from formylmethanofuran (formyl-MFR) to tetrahydromethanopterin (H(4)MPT) to produce 5-formyl tetrahydromethanopterin (5-formyl-H(4)MPT) and methanofuran (MFR). This Methanosarcina mazei (strain ATCC BAA-159 / DSM 3647 / Goe1 / Go1 / JCM 11833 / OCM 88) (Methanosarcina frisia) protein is Formylmethanofuran--tetrahydromethanopterin formyltransferase.